Reading from the N-terminus, the 371-residue chain is MRAIGLMSGTSMDGIDAALIETDGETVAWLGSALTIPYGAETRALLEGAMADARGVNARTDRPGRLVEAERRITTLHGAAVRALLDSLRLTPADIDVVGFHGQTVLHRPDAALTVQIGLGQALADDLRIPVVADLRAADVAAGGQGAPLVPVFHQALVRGLDLPQPVAVLNIGGVANVTVLEDGADPIACDTGPGNALLDDFMAARTGRPYDDDGASAARGQVDEAAVAEVLGHPFFAAPPPKSLDRNEFRAFVTERLHLAGASTDDGAATLTALSAASIAAVVPLLPKAPKSWIVAGGGARNSTLRAMLAERLGVPVVVAEQVGWSADALEAHAFGFLAVRSLKGLALTFPTTTGAPEPLTGGVLFQPTP.

9–16 (GTSMDGID) lines the ATP pocket.

This sequence belongs to the anhydro-N-acetylmuramic acid kinase family.

The enzyme catalyses 1,6-anhydro-N-acetyl-beta-muramate + ATP + H2O = N-acetyl-D-muramate 6-phosphate + ADP + H(+). It functions in the pathway amino-sugar metabolism; 1,6-anhydro-N-acetylmuramate degradation. Its pathway is cell wall biogenesis; peptidoglycan recycling. In terms of biological role, catalyzes the specific phosphorylation of 1,6-anhydro-N-acetylmuramic acid (anhMurNAc) with the simultaneous cleavage of the 1,6-anhydro ring, generating MurNAc-6-P. Is required for the utilization of anhMurNAc either imported from the medium or derived from its own cell wall murein, and thus plays a role in cell wall recycling. This chain is Anhydro-N-acetylmuramic acid kinase, found in Azorhizobium caulinodans (strain ATCC 43989 / DSM 5975 / JCM 20966 / LMG 6465 / NBRC 14845 / NCIMB 13405 / ORS 571).